A 394-amino-acid chain; its full sequence is Elongation factor Tu (394 aa).

Residues 10 to 204 (KPHVNVGTIG…ALDTYIPEPE (195 aa)) form the tr-type G domain. The segment at 19–26 (GHVDHGKT) is G1. Position 19–26 (19–26 (GHVDHGKT)) interacts with GTP. A Mg(2+)-binding site is contributed by threonine 26. A G2 region spans residues 60 to 64 (GITIN). The segment at 81-84 (DCPG) is G3. Residues 81–85 (DCPGH) and 136–139 (NKCD) each bind GTP. Residues 136–139 (NKCD) are G4. The G5 stretch occupies residues 174 to 176 (SAL).

This sequence belongs to the TRAFAC class translation factor GTPase superfamily. Classic translation factor GTPase family. EF-Tu/EF-1A subfamily. Monomer.

The protein resides in the cytoplasm. The enzyme catalyses GTP + H2O = GDP + phosphate + H(+). Its function is as follows. GTP hydrolase that promotes the GTP-dependent binding of aminoacyl-tRNA to the A-site of ribosomes during protein biosynthesis. The polypeptide is Elongation factor Tu (Shewanella pealeana (strain ATCC 700345 / ANG-SQ1)).